Consider the following 151-residue polypeptide: Large ribosomal subunit protein bL9 (151 aa).

The protein belongs to the bacterial ribosomal protein bL9 family.

Functionally, binds to the 23S rRNA. In Bordetella petrii (strain ATCC BAA-461 / DSM 12804 / CCUG 43448), this protein is Large ribosomal subunit protein bL9.